Consider the following 350-residue polypeptide: Ookinete surface protein PIMMS43 (350 aa).

An N-terminal signal peptide occupies residues M1–G24. The helical transmembrane segment at N330–L350 threads the bilayer.

As to quaternary structure, forms multimers, perhaps with an unknown protein(s).

It localises to the membrane. Its function is as follows. Involved in ookinete evasion of the mosquito complement-like response, oocyst maturation, sporozoite development and infectivity. The sequence is that of Ookinete surface protein PIMMS43 from Plasmodium berghei (strain Anka).